A 265-amino-acid chain; its full sequence is tRNA pseudouridine synthase A (265 aa).

Residue Asp-58 is the Nucleophile of the active site. Tyr-116 serves as a coordination point for substrate.

Belongs to the tRNA pseudouridine synthase TruA family. In terms of assembly, homodimer.

The enzyme catalyses uridine(38/39/40) in tRNA = pseudouridine(38/39/40) in tRNA. Functionally, formation of pseudouridine at positions 38, 39 and 40 in the anticodon stem and loop of transfer RNAs. The sequence is that of tRNA pseudouridine synthase A from Neisseria meningitidis serogroup C (strain 053442).